The following is a 121-amino-acid chain: Large ribosomal subunit protein eL18 (121 aa).

It belongs to the eukaryotic ribosomal protein eL18 family.

This chain is Large ribosomal subunit protein eL18, found in Methanoregula boonei (strain DSM 21154 / JCM 14090 / 6A8).